The sequence spans 454 residues: Nuclear distribution protein PAC1-1 (454 aa).

The LisH domain maps to 9–41; that stretch reads QAEELHRALIAYLSSNNLTSTAAALRAEIGLGE. The interval 71 to 93 is disordered; the sequence is RHTSQLSNATPTSRQNKDPVNWL. A compositionally biased stretch (polar residues) spans 73 to 84; that stretch reads TSQLSNATPTSR. WD repeat units follow at residues 104-145, 147-187, 191-236, 239-278, 283-342, 344-383, and 388-450; these read SHRQ…RTIK, HTKT…KNIR, GHDH…CVKT, GHAE…PEPK, GHEH…IKIL, GHDN…RCVK, and AHAH…LNVR.

It belongs to the WD repeat LIS1/nudF family. Self-associates. Interacts with NDL1 and dynein.

It is found in the cytoplasm. The protein localises to the cytoskeleton. It localises to the spindle pole. Its function is as follows. Positively regulates the activity of the minus-end directed microtubule motor protein dynein. May enhance dynein-mediated microtubule sliding by targeting dynein to the microtubule plus end. Required for nuclear migration during vegetative growth as well as development. Required for retrograde early endosome (EE) transport from the hyphal tip. Required for localization of dynein to the mitotic spindle poles. Recruits additional proteins to the dynein complex at SPBs. The sequence is that of Nuclear distribution protein PAC1-1 from Chaetomium globosum (strain ATCC 6205 / CBS 148.51 / DSM 1962 / NBRC 6347 / NRRL 1970) (Soil fungus).